Reading from the N-terminus, the 61-residue chain is MAKTSMIVKQSRTPKFRVRAHNRCKICGRPHAYMRKFGMCRICFRNLAYKGEIPGVTKASW.

C24, C27, C40, and C43 together coordinate Zn(2+).

This sequence belongs to the universal ribosomal protein uS14 family. Zinc-binding uS14 subfamily. As to quaternary structure, part of the 30S ribosomal subunit. Contacts proteins S3 and S10. The cofactor is Zn(2+).

In terms of biological role, binds 16S rRNA, required for the assembly of 30S particles and may also be responsible for determining the conformation of the 16S rRNA at the A site. This is Small ribosomal subunit protein uS14 from Heliobacterium modesticaldum (strain ATCC 51547 / Ice1).